Consider the following 188-residue polypeptide: Protein CRIPTO3 (188 aa).

The EGF-like domain maps to 78-107 (LNRTCCLNGGTCMLESFCACPPSFYGRNCE). A glycan (N-linked (GlcNAc...) asparagine) is linked at Asn-79. 6 cysteine pairs are disulfide-bonded: Cys-82–Cys-89, Cys-83–Cys-95, Cys-97–Cys-106, Cys-115–Cys-133, Cys-128–Cys-149, and Cys-131–Cys-140.

It belongs to the EGF-CFC (Cripto-1/FRL1/Cryptic) family. As to expression, expressed weakly in lung, colon and breast. Expressed also strongly in primary cancer tissues; lung and colon cancers.

The protein localises to the cell membrane. Its function is as follows. Could play a role in the determination of the epiblastic cells that subsequently give rise to the mesoderm. Activates the Nodal-dependent signaling pathway. The sequence is that of Protein CRIPTO3 from Homo sapiens (Human).